The following is a 268-amino-acid chain: Undecaprenyl-diphosphatase (268 aa).

A run of 7 helical transmembrane segments spans residues 5–25 (SIIS…IPVS), 43–63 (GNTF…LVYF), 84–104 (LSVL…HGFI), 109–129 (FETP…LYVI), 184–204 (AAEF…ALDL), 213–233 (IDDI…GIFV), and 248–268 (PFAI…WLLG).

The protein belongs to the UppP family.

Its subcellular location is the cell inner membrane. The enzyme catalyses di-trans,octa-cis-undecaprenyl diphosphate + H2O = di-trans,octa-cis-undecaprenyl phosphate + phosphate + H(+). Functionally, catalyzes the dephosphorylation of undecaprenyl diphosphate (UPP). Confers resistance to bacitracin. This Sinorhizobium medicae (strain WSM419) (Ensifer medicae) protein is Undecaprenyl-diphosphatase.